The chain runs to 206 residues: Large ribosomal subunit protein uL4 (206 aa).

Residues 44 to 87 (NRQGTQSAKTRSEVSGGGRKPWRQKGTGHARQGSTRSPQWTGGG) are disordered.

The protein belongs to the universal ribosomal protein uL4 family. As to quaternary structure, part of the 50S ribosomal subunit.

In terms of biological role, one of the primary rRNA binding proteins, this protein initially binds near the 5'-end of the 23S rRNA. It is important during the early stages of 50S assembly. It makes multiple contacts with different domains of the 23S rRNA in the assembled 50S subunit and ribosome. Functionally, forms part of the polypeptide exit tunnel. In Lachnospira eligens (strain ATCC 27750 / DSM 3376 / VPI C15-48 / C15-B4) (Eubacterium eligens), this protein is Large ribosomal subunit protein uL4.